A 160-amino-acid chain; its full sequence is SsrA-binding protein (160 aa).

The segment at 131–160 (KKEYDKRDTEKARDSDREIQRAIRSKGKED) is disordered.

This sequence belongs to the SmpB family.

The protein localises to the cytoplasm. Functionally, required for rescue of stalled ribosomes mediated by trans-translation. Binds to transfer-messenger RNA (tmRNA), required for stable association of tmRNA with ribosomes. tmRNA and SmpB together mimic tRNA shape, replacing the anticodon stem-loop with SmpB. tmRNA is encoded by the ssrA gene; the 2 termini fold to resemble tRNA(Ala) and it encodes a 'tag peptide', a short internal open reading frame. During trans-translation Ala-aminoacylated tmRNA acts like a tRNA, entering the A-site of stalled ribosomes, displacing the stalled mRNA. The ribosome then switches to translate the ORF on the tmRNA; the nascent peptide is terminated with the 'tag peptide' encoded by the tmRNA and targeted for degradation. The ribosome is freed to recommence translation, which seems to be the essential function of trans-translation. The protein is SsrA-binding protein of Azotobacter vinelandii (strain DJ / ATCC BAA-1303).